The sequence spans 325 residues: 26S proteasome non-ATPase regulatory subunit 7 (325 aa).

Positions 8–142 (TIVHPTVLLS…TKSYVTVEEI (135 aa)) constitute an MPN domain. Residues 285–325 (KKADIINSTPPTTATSPSVADKGKEKEQNAFNGADKPSKQA) form a disordered region. A compositionally biased stretch (low complexity) spans 292–302 (STPPTTATSPS).

This sequence belongs to the peptidase M67A family.

In terms of biological role, acts as a regulatory subunit of the 26S proteasome which is involved in the ATP-dependent degradation of ubiquitinated proteins. This chain is 26S proteasome non-ATPase regulatory subunit 7 (psmD7), found in Dictyostelium discoideum (Social amoeba).